The following is a 173-amino-acid chain: Crossover junction endodeoxyribonuclease RuvC (173 aa).

Active-site residues include Asp8, Glu67, and Asp139. Mg(2+) contacts are provided by Asp8, Glu67, and Asp139.

Belongs to the RuvC family. As to quaternary structure, homodimer which binds Holliday junction (HJ) DNA. The HJ becomes 2-fold symmetrical on binding to RuvC with unstacked arms; it has a different conformation from HJ DNA in complex with RuvA. In the full resolvosome a probable DNA-RuvA(4)-RuvB(12)-RuvC(2) complex forms which resolves the HJ. The cofactor is Mg(2+).

The protein resides in the cytoplasm. It catalyses the reaction Endonucleolytic cleavage at a junction such as a reciprocal single-stranded crossover between two homologous DNA duplexes (Holliday junction).. Its function is as follows. The RuvA-RuvB-RuvC complex processes Holliday junction (HJ) DNA during genetic recombination and DNA repair. Endonuclease that resolves HJ intermediates. Cleaves cruciform DNA by making single-stranded nicks across the HJ at symmetrical positions within the homologous arms, yielding a 5'-phosphate and a 3'-hydroxyl group; requires a central core of homology in the junction. The consensus cleavage sequence is 5'-(A/T)TT(C/G)-3'. Cleavage occurs on the 3'-side of the TT dinucleotide at the point of strand exchange. HJ branch migration catalyzed by RuvA-RuvB allows RuvC to scan DNA until it finds its consensus sequence, where it cleaves and resolves the cruciform DNA. This Aeromonas salmonicida (strain A449) protein is Crossover junction endodeoxyribonuclease RuvC.